A 395-amino-acid polypeptide reads, in one-letter code: Putative gustatory receptor 93b (395 aa).

The Cytoplasmic portion of the chain corresponds to 1 to 18; that stretch reads MSGLLVMPRILRCLNVSR. Residues 19–39 traverse the membrane as a helical segment; sequence ISAILLRSCFLYGTFFGVITF. The Extracellular segment spans residues 40-89; sequence RIERKDSQLVAINRRGYLWICLVIRLLASCFYGYSYDAWSGQYEDMYLRA. A helical transmembrane segment spans residues 90–110; that stretch reads FFGFRLIGCLICSVIILVMQF. At 111–153 the chain is on the cytoplasmic side; the sequence is WFGEELINLVNRFLQLFRRMQSLTNSPKNRFGDRAEFLLMFSK. The chain crosses the membrane as a helical span at residues 154–174; that stretch reads VFSLLFVFMAFRLMLSPWFLL. Residues 175-183 lie on the Extracellular side of the membrane; sequence TLVCDLYTS. A helical transmembrane segment spans residues 184-204; sequence VGTGMITHLCFVGYLSIGVLY. Over 205–267 the chain is Cytoplasmic; it reads RDLNNYVDCQ…RSFQQLFDLP (63 aa). The helical transmembrane segment at 268–288 threads the bilayer; sequence LFLSLAQSLLAMSMVSYHAIL. Residues 289 to 293 are Extracellular-facing; it reads RRQYS. Residues 294 to 314 traverse the membrane as a helical segment; the sequence is FNLWGLVIKLLIDVVLLTMSV. Residues 315–369 lie on the Cytoplasmic side of the membrane; it reads HSAVNGSRLIRRLSFENFYVTDSQSYHQKLELFLGRLQHQELRVFPLGLFEVSNE. The chain crosses the membrane as a helical span at residues 370–390; sequence LTLFFLSAMVTYLVFLVQYGM. Residues 391–395 are Extracellular-facing; the sequence is QSQQI.

This sequence belongs to the insect chemoreceptor superfamily. Gustatory receptor (GR) family. Gr93a subfamily. In larvae, is expressed in neurons of the terminal external chemosensory organ and of the dorsal pharyngeal sense organ.

Its subcellular location is the cell membrane. In terms of biological role, probable gustatory receptor which mediates acceptance or avoidance behavior, depending on its substrates. In Drosophila melanogaster (Fruit fly), this protein is Putative gustatory receptor 93b (Gr93b).